A 174-amino-acid polypeptide reads, in one-letter code: uncharacterized protein (174 aa).

The tract at residues 153–174 (RSGNHSAGNVHPASPMIKVQGG) is disordered.

This is an uncharacterized protein from Sinorhizobium fredii (strain NBRC 101917 / NGR234).